A 354-amino-acid polypeptide reads, in one-letter code: Lysophosphatidic acid receptor 3 (354 aa).

The Extracellular segment spans residues 1 to 31; that stretch reads MNECHYDKRMDFFYNRSNTDTADEWTGTKLV. N15 carries N-linked (GlcNAc...) asparagine glycosylation. Residues 32 to 52 traverse the membrane as a helical segment; that stretch reads IVLCVGTFFCLFIFFSNSLVI. Topologically, residues 53-67 are cytoplasmic; sequence AAVITNRKFHFPFYY. The chain crosses the membrane as a helical span at residues 68–88; it reads LLANLAAADFFAGIAYVFLMF. At 89 to 101 the chain is on the extracellular side; that stretch reads NTGPVSKTLTVNR. The chain crosses the membrane as a helical span at residues 102–124; that stretch reads WFLRQGLLDTSLTASLANLLVIA. Residues 125–146 are Cytoplasmic-facing; it reads VERHMSIMRMRVHSNLTKKRVT. Residues 147–167 traverse the membrane as a helical segment; it reads LLILLVWAIAIFMGAVPTLGW. Residues 168–186 are Extracellular-facing; that stretch reads NCLCNISACSSLAPIYSRS. N172 is a glycosylation site (N-linked (GlcNAc...) asparagine). Residues 187–207 form a helical membrane-spanning segment; it reads YLIFWTVSNLLAFFIMVAVYV. Over 208-240 the chain is Cytoplasmic; the sequence is RIYMYVKRKTNVLSPHTSGSISRRRAPMKLMKT. A helical transmembrane segment spans residues 241 to 261; it reads VMTVLGAFVVCWTPGLVVLLL. Residues 262 to 276 are Extracellular-facing; that stretch reads DGLNCKQCNVQHVKR. A helical transmembrane segment spans residues 277–295; it reads WFLLLALLNSVMNPIIYSY. At 296 to 354 the chain is on the cytoplasmic side; the sequence is KDEDMYNTMRKMICCALQDSNTERRPSRNPSTIHSRSETGSQYLEDSISQGPVCNKNGS. C309 carries the S-palmitoyl cysteine lipid modification. Residues 315–354 are disordered; the sequence is SNTERRPSRNPSTIHSRSETGSQYLEDSISQGPVCNKNGS. The segment covering 323-354 has biased composition (polar residues); that stretch reads RNPSTIHSRSETGSQYLEDSISQGPVCNKNGS.

It belongs to the G-protein coupled receptor 1 family. As to expression, most abundantly expressed in testes, kidney, and lung, with moderate levels in small intestine, and low levels in heart, stomach, spleen, and adult and perinatal brain. Little or no expression in embryonic brain, liver, or thymus.

The protein localises to the cell membrane. Receptor for lysophosphatidic acid (LPA), a mediator of diverse cellular activities. Seems to be coupled to the G(i)/G(o) and G(q) families of heteromeric G proteins. This chain is Lysophosphatidic acid receptor 3 (Lpar3), found in Mus musculus (Mouse).